A 133-amino-acid chain; its full sequence is DNA-directed RNA polymerases I, II, and III subunit rpabc2 (133 aa).

Residues 1-32 show a composition bias toward acidic residues; that stretch reads MADFEGGGDDGGYEEFDEGGGFEEEYVEETET. Residues 1–55 form a disordered region; it reads MADFEGGGDDGGYEEFDEGGGFEEEYVEETETTEAYTDIIDPSADANTAEAGRIP.

Belongs to the archaeal Rpo6/eukaryotic RPB6 RNA polymerase subunit family. In terms of assembly, component of the RNA polymerase I (Pol I), RNA polymerase II (Pol II) and RNA polymerase III (Pol III) complexes consisting of at least 13, 12 and 17 subunits, respectively.

It localises to the nucleus. DNA-dependent RNA polymerases catalyze the transcription of DNA into RNA using the four ribonucleoside triphosphates as substrates. Common component of RNA polymerases I, II and III which synthesize ribosomal RNA precursors, mRNA precursors and many functional non-coding RNAs, and small RNAs, such as 5S rRNA and tRNAs, respectively. Pol II is the central component of the basal RNA polymerase II transcription machinery. Pols are composed of mobile elements that move relative to each other. In Pol II, RPB6 is part of the clamp element and together with parts of RPB1 and RPB2 forms a pocket to which the RPB4-RPB7 subcomplex binds. This is DNA-directed RNA polymerases I, II, and III subunit rpabc2 (polr2f) from Dictyostelium discoideum (Social amoeba).